A 141-amino-acid polypeptide reads, in one-letter code: Large ribosomal subunit protein uL11 (141 aa).

It belongs to the universal ribosomal protein uL11 family. As to quaternary structure, part of the ribosomal stalk of the 50S ribosomal subunit. Interacts with L10 and the large rRNA to form the base of the stalk. L10 forms an elongated spine to which L12 dimers bind in a sequential fashion forming a multimeric L10(L12)X complex. In terms of processing, one or more lysine residues are methylated.

Forms part of the ribosomal stalk which helps the ribosome interact with GTP-bound translation factors. This Chlorobium phaeobacteroides (strain BS1) protein is Large ribosomal subunit protein uL11.